Reading from the N-terminus, the 131-residue chain is Small ribosomal subunit protein uS8 (131 aa).

This sequence belongs to the universal ribosomal protein uS8 family. Part of the 30S ribosomal subunit. Contacts proteins S5 and S12.

Functionally, one of the primary rRNA binding proteins, it binds directly to 16S rRNA central domain where it helps coordinate assembly of the platform of the 30S subunit. The polypeptide is Small ribosomal subunit protein uS8 (Verminephrobacter eiseniae (strain EF01-2)).